Reading from the N-terminus, the 350-residue chain is Thymidine kinase (350 aa).

17–24 is a binding site for ATP; that stretch reads GPFGIGKT. Glu-45 serves as the catalytic Proton acceptor. Residue Gln-86 coordinates substrate. ATP is bound at residue Arg-176. A substrate-binding site is contributed by Arg-182.

The protein belongs to the herpesviridae thymidine kinase family. Homodimer.

The enzyme catalyses thymidine + ATP = dTMP + ADP + H(+). Functionally, catalyzes the transfer of the gamma-phospho group of ATP to thymidine to generate dTMP in the salvage pathway of pyrimidine synthesis. The dTMP serves as a substrate for DNA polymerase during viral DNA replication. Allows the virus to be reactivated and to grow in non-proliferative cells lacking a high concentration of phosphorylated nucleic acid precursors. This chain is Thymidine kinase, found in Gallus gallus (Chicken).